A 456-amino-acid chain; its full sequence is UDP-N-acetylmuramate--L-alanine ligase (456 aa).

Glycine 118–threonine 124 is an ATP binding site.

The protein belongs to the MurCDEF family.

The protein resides in the cytoplasm. The enzyme catalyses UDP-N-acetyl-alpha-D-muramate + L-alanine + ATP = UDP-N-acetyl-alpha-D-muramoyl-L-alanine + ADP + phosphate + H(+). It functions in the pathway cell wall biogenesis; peptidoglycan biosynthesis. Cell wall formation. This chain is UDP-N-acetylmuramate--L-alanine ligase, found in Paenarthrobacter aurescens (strain TC1).